Here is a 984-residue protein sequence, read N- to C-terminus: Probable beta-galactosidase C (984 aa).

Positions 1–23 (MRLLSFIYLVWLALLTGTPQVSA) are cleaved as a signal peptide. Tyr82, Asn127, Ala128, Glu129, and Asn187 together coordinate substrate. The Proton donor role is filled by Glu188. An N-linked (GlcNAc...) asparagine glycan is attached at Asn197. Residue Tyr251 participates in substrate binding. Cys257 and Cys304 are disulfide-bonded. Asn276 carries N-linked (GlcNAc...) asparagine glycosylation. Glu287 (nucleophile) is an active-site residue. Substrate is bound at residue Tyr353. 10 N-linked (GlcNAc...) asparagine glycosylation sites follow: Asn391, Asn421, Asn434, Asn517, Asn602, Asn677, Asn715, Asn720, Asn759, and Asn805.

The protein belongs to the glycosyl hydrolase 35 family.

The protein resides in the secreted. It catalyses the reaction Hydrolysis of terminal non-reducing beta-D-galactose residues in beta-D-galactosides.. In terms of biological role, cleaves beta-linked terminal galactosyl residues from gangliosides, glycoproteins, and glycosaminoglycans. This chain is Probable beta-galactosidase C (lacC), found in Aspergillus flavus (strain ATCC 200026 / FGSC A1120 / IAM 13836 / NRRL 3357 / JCM 12722 / SRRC 167).